We begin with the raw amino-acid sequence, 203 residues long: Putative 3-methyladenine DNA glycosylase (203 aa).

It belongs to the DNA glycosylase MPG family.

The sequence is that of Putative 3-methyladenine DNA glycosylase from Clostridium botulinum (strain ATCC 19397 / Type A).